The sequence spans 310 residues: MAPKIFIDGEHGTTGLQIRTRMAGRRDVELLSIPEAERRNAAMREDMLNGADIAILCLPDDASKEAVQMVSANNNVRVIDTSTAFRVNPGWAYGFAEMDKQQADKIAAARFVANPGCYPTGAIGLIRPLRAAGILPDGYPITVNAVSGYTGGGKQMIAQMENPDHPDAITAPHFLYGLPLTHKHVPEMTVHGLLDRAPIFSPSVGKFAQGMIVQVPLHLDDLAEGTTMESIHAALVAHYAGQDIVSVVPLAESKALPRVNAIELEGKDTMKLFVFGTPGASQVNLVALLDNLGKGASGAAVQNMDLMLAS.

Cys-117 is an active-site residue.

Belongs to the NAGSA dehydrogenase family. Type 2 subfamily.

It is found in the cytoplasm. It catalyses the reaction N-acetyl-L-glutamate 5-semialdehyde + phosphate + NADP(+) = N-acetyl-L-glutamyl 5-phosphate + NADPH + H(+). It functions in the pathway amino-acid biosynthesis; L-arginine biosynthesis; N(2)-acetyl-L-ornithine from L-glutamate: step 3/4. Its function is as follows. Catalyzes the NADPH-dependent reduction of N-acetyl-5-glutamyl phosphate to yield N-acetyl-L-glutamate 5-semialdehyde. This chain is N-acetyl-gamma-glutamyl-phosphate reductase, found in Rhizobium johnstonii (strain DSM 114642 / LMG 32736 / 3841) (Rhizobium leguminosarum bv. viciae).